A 362-amino-acid chain; its full sequence is Serine/threonine-protein kinase SBK2 (362 aa).

A compositionally biased stretch (basic and acidic residues) spans 1 to 11 (MPGKQSEDRPM). A disordered region spans residues 1–20 (MPGKQSEDRPMEVAAVEDGG). The region spanning 62 to 330 (YEEVRPLGQG…IKSYLGQPWK (269 aa)) is the Protein kinase domain. Residues 68–76 (LGQGRFGRV) and lysine 91 contribute to the ATP site. The Proton acceptor role is filled by aspartate 183. The tract at residues 317–362 (PVSSIKSYLGQPWKQREEGAEELTKELREDGSRGGQEAAKGEQPAC) is disordered. Basic and acidic residues predominate over residues 330-348 (KQREEGAEELTKELREDGS).

Belongs to the protein kinase superfamily. Ser/Thr protein kinase family. STKL subfamily.

The catalysed reaction is L-seryl-[protein] + ATP = O-phospho-L-seryl-[protein] + ADP + H(+). It catalyses the reaction L-threonyl-[protein] + ATP = O-phospho-L-threonyl-[protein] + ADP + H(+). The protein is Serine/threonine-protein kinase SBK2 (Sbk2) of Rattus norvegicus (Rat).